The following is a 533-amino-acid chain: Flavin-containing monooxygenase 5 (533 aa).

Dimethylated arginine is present on Arg-5. Residues Gly-10–Ser-14, Glu-33, and Leu-41–Trp-42 each bind FAD. Ser-54 bears the Phosphoserine mark. Tyr-56 carries the post-translational modification Phosphotyrosine. Ser-58 carries the post-translational modification Phosphoserine. Asn-62–Thr-63 lines the FAD pocket. Ser-196–Asp-199 lines the NADP(+) pocket. Residue Thr-284 is modified to Phosphothreonine. Ser-401 carries the phosphoserine modification. The helical transmembrane segment at Leu-513–Phe-533 threads the bilayer.

This sequence belongs to the FMO family. It depends on FAD as a cofactor.

It is found in the microsome membrane. The protein resides in the endoplasmic reticulum membrane. It carries out the reaction N,N-dimethylaniline + NADPH + O2 + H(+) = N,N-dimethylaniline N-oxide + NADP(+) + H2O. It catalyses the reaction NADPH + O2 + H(+) = H2O2 + NADP(+). The catalysed reaction is heptan-2-one + NADPH + O2 + H(+) = pentyl acetate + NADP(+) + H2O. The enzyme catalyses octan-3-one + NADPH + O2 + H(+) = pentyl propanoate + NADP(+) + H2O. It carries out the reaction octan-3-one + NADPH + O2 + H(+) = ethyl hexanoate + NADP(+) + H2O. It catalyses the reaction hexan-3-one + NADPH + O2 + H(+) = ethyl butanoate + NADP(+) + H2O. The catalysed reaction is hexan-3-one + NADPH + O2 + H(+) = propyl propanoate + NADP(+) + H2O. The enzyme catalyses heptan-4-one + NADPH + O2 + H(+) = propyl butanoate + NADP(+) + H2O. It carries out the reaction (2E)-geranial + NADPH + O2 + H(+) = (1E)-2,6-dimethylhepta-1,5-dien-1-yl formate + NADP(+) + H2O. It catalyses the reaction sulcatone + NADPH + O2 + H(+) = 4-methylpent-3-en-1-yl acetate + NADP(+) + H2O. Acts as a Baeyer-Villiger monooxygenase on a broad range of substrates. Catalyzes the insertion of an oxygen atom into a carbon-carbon bond adjacent to a carbonyl, which converts ketones to esters. Active on diverse carbonyl compounds, whereas soft nucleophiles are mostly non- or poorly reactive. In contrast with other forms of FMO it is non- or poorly active on 'classical' substrates such as drugs, pesticides, and dietary components containing soft nucleophilic heteroatoms. Able to oxidize drug molecules bearing a carbonyl group on an aliphatic chain, such as nabumetone and pentoxifylline. Also, in the absence of substrates, shows slow but yet significant NADPH oxidase activity. Acts as a positive modulator of cholesterol biosynthesis as well as glucose homeostasis, promoting metabolic aging via pleiotropic effects. This chain is Flavin-containing monooxygenase 5, found in Rattus norvegicus (Rat).